The sequence spans 189 residues: MSIKSDRWIKRMAEQHAMIEPFEPGQIKHDAAGQRIVSFGTSSYGYDVRCSREFKIFTNINSTIVDPKHFDPGSFVDIESDVCIIPPNSFALARTVEYFRIPRDTLVVCLGKSTYARCGIIVNVTPLEPEWEGRVTLEFSNTTPLPARIYANEGVAQMLFFQSDEVCETSYKDRGGKYQGQTGVTLPRT.

Residues 112-117 (KSTYAR), 136-138 (TLE), Gln-157, Tyr-171, and Gln-181 contribute to the dCTP site. The active-site Proton donor/acceptor is the Glu-138.

The protein belongs to the dCTP deaminase family. In terms of assembly, homotrimer.

The enzyme catalyses dCTP + H2O + H(+) = dUTP + NH4(+). Its pathway is pyrimidine metabolism; dUMP biosynthesis; dUMP from dCTP (dUTP route): step 1/2. In terms of biological role, catalyzes the deamination of dCTP to dUTP. The polypeptide is dCTP deaminase (Xanthomonas campestris pv. campestris (strain 8004)).